A 63-amino-acid chain; its full sequence is MAGGRIAHATLKGPSVVKEICIGLTLGLVAGGLWKMHHWNEQRKTRSFYDMLEKGQISVVVEE.

Residues 16-34 form a helical membrane-spanning segment; that stretch reads VVKEICIGLTLGLVAGGLW.

Belongs to the cytochrome c oxidase subunit 5C family.

Its subcellular location is the mitochondrion inner membrane. Its function is as follows. This protein is one of the nuclear-coded polypeptide chains of cytochrome c oxidase, the terminal oxidase in mitochondrial electron transport. The polypeptide is Cytochrome c oxidase subunit 5C (COX5C) (Oryza sativa subsp. japonica (Rice)).